A 1316-amino-acid polypeptide reads, in one-letter code: Serine/threonine-protein kinase 36 (1316 aa).

The region spanning 4–254 (YHVLEMIGEG…WPDLLHHPFI (251 aa)) is the Protein kinase domain. ATP contacts are provided by residues 10–18 (IGEGSFGRV) and Lys33. Residue Asp125 is the Proton acceptor of the active site. Residues 389-418 (QGFPEPRPEAMGRQSTDVVDPENEEPDSDD) form a disordered region. Residues 407 to 418 (VDPENEEPDSDD) are compositionally biased toward acidic residues.

It belongs to the protein kinase superfamily. Ser/Thr protein kinase family. Interacts with SPAG16 and KIF27. Mg(2+) is required as a cofactor. In terms of tissue distribution, weakly expressed in the heart and thymus, present at moderate to high levels in the lungs, pancreas, and kidneys and at higher levels in the brain and cerebellum. Very highly expressed in the testis.

It is found in the cytoplasm. The protein localises to the nucleus. It localises to the cytoskeleton. The protein resides in the cilium axoneme. It carries out the reaction L-seryl-[protein] + ATP = O-phospho-L-seryl-[protein] + ADP + H(+). The catalysed reaction is L-threonyl-[protein] + ATP = O-phospho-L-threonyl-[protein] + ADP + H(+). Its function is as follows. Serine/threonine protein kinase which plays an important role in the sonic hedgehog (Shh) pathway by regulating the activity of GLI transcription factors. Controls the activity of the transcriptional regulators GLI1, GLI2 and GLI3 by opposing the effect of SUFU and promoting their nuclear localization. GLI2 requires an additional function of STK36 to become transcriptionally active, but the enzyme does not need to possess an active kinase catalytic site for this to occur. Required for postnatal development, possibly by regulating the homeostasis of cerebral spinal fluid or ciliary function. Essential for construction of the central pair apparatus of motile cilia. This Mus musculus (Mouse) protein is Serine/threonine-protein kinase 36.